A 632-amino-acid chain; its full sequence is Probable potassium transport system protein Kup 2 (632 aa).

Helical transmembrane passes span 19 to 39, 58 to 78, 110 to 130, 147 to 167, 178 to 198, 216 to 236, 257 to 277, 290 to 310, 347 to 367, 377 to 397, 404 to 424, and 429 to 449; these read FWGL…TSPL, MIVL…VTAK, MFLM…SMIT, PALE…LFAV, AFGP…IVHI, FLLS…LAVT, WLFF…ALVL, MVPE…TVIA, IYLP…VLLF, YGIA…VVIW, AAVA…FFSA, and LFEG…TIWT.

Belongs to the HAK/KUP transporter (TC 2.A.72) family.

The protein resides in the cell inner membrane. It carries out the reaction K(+)(in) + H(+)(in) = K(+)(out) + H(+)(out). Functionally, transport of potassium into the cell. Likely operates as a K(+):H(+) symporter. In Bradyrhizobium sp. (strain BTAi1 / ATCC BAA-1182), this protein is Probable potassium transport system protein Kup 2.